The following is a 140-amino-acid chain: Large-conductance mechanosensitive channel (140 aa).

2 helical membrane-spanning segments follow: residues 14–34 and 85–105; these read VMDL…TGSL and GAFV…FLLV.

Belongs to the MscL family. As to quaternary structure, homopentamer.

The protein resides in the cell inner membrane. Channel that opens in response to stretch forces in the membrane lipid bilayer. May participate in the regulation of osmotic pressure changes within the cell. The sequence is that of Large-conductance mechanosensitive channel from Sphingopyxis alaskensis (strain DSM 13593 / LMG 18877 / RB2256) (Sphingomonas alaskensis).